Here is an 871-residue protein sequence, read N- to C-terminus: DNA mismatch repair protein MutS (871 aa).

G618–S625 is a binding site for ATP.

Belongs to the DNA mismatch repair MutS family.

Its function is as follows. This protein is involved in the repair of mismatches in DNA. It is possible that it carries out the mismatch recognition step. This protein has a weak ATPase activity. The sequence is that of DNA mismatch repair protein MutS from Christiangramia forsetii (strain DSM 17595 / CGMCC 1.15422 / KT0803) (Gramella forsetii).